The primary structure comprises 317 residues: Transaldolase (317 aa).

Catalysis depends on K132, which acts as the Schiff-base intermediate with substrate.

This sequence belongs to the transaldolase family. Type 1 subfamily. In terms of assembly, homodimer.

It is found in the cytoplasm. It carries out the reaction D-sedoheptulose 7-phosphate + D-glyceraldehyde 3-phosphate = D-erythrose 4-phosphate + beta-D-fructose 6-phosphate. It functions in the pathway carbohydrate degradation; pentose phosphate pathway; D-glyceraldehyde 3-phosphate and beta-D-fructose 6-phosphate from D-ribose 5-phosphate and D-xylulose 5-phosphate (non-oxidative stage): step 2/3. Functionally, transaldolase is important for the balance of metabolites in the pentose-phosphate pathway. The polypeptide is Transaldolase (Histophilus somni (strain 2336) (Haemophilus somnus)).